The primary structure comprises 316 residues: METWQELKVTVKREGEELVSNLLIELGAQGVAIEDSLDYVGNVDRFGEIFPEVEQQEEIVVTAYYPDTVDVTVVEADLQARLAELTDFMDLGELKIGTTALAEEDWADNWKKYYEPARITHDLTIVPSWTDYEATAGEKIIKLDPGMAFGTGTHPTTKMSLFALEQVLRGGETVLDVGTGSGVLSIASSLLGAKEIFAYDLDDVAVRVAQENIELNPGMENIHVAAGDLLKGVEIEADVIVANILADILIHLIDDAYRLVKDEGYLIMSGIIKDKWDMVRESAESAGFFLETHMIQGEWNACVFKKTKDISGVIGG.

Residues T157, G178, D200, and N243 each coordinate S-adenosyl-L-methionine.

The protein belongs to the methyltransferase superfamily. PrmA family.

The protein localises to the cytoplasm. It carries out the reaction L-lysyl-[protein] + 3 S-adenosyl-L-methionine = N(6),N(6),N(6)-trimethyl-L-lysyl-[protein] + 3 S-adenosyl-L-homocysteine + 3 H(+). In terms of biological role, methylates ribosomal protein L11. The polypeptide is Ribosomal protein L11 methyltransferase (Streptococcus pneumoniae (strain ATCC 700669 / Spain 23F-1)).